The following is a 141-amino-acid chain: Hemoglobin subunit alpha (141 aa).

The 141-residue stretch at 1–141 folds into the Globin domain; it reads VLSPADKTNV…VSTVLTSKYR (141 aa). At Ser-3 the chain carries Phosphoserine. Lys-7 carries the post-translational modification N6-succinyllysine. Thr-8 carries the post-translational modification Phosphothreonine. Lys-11 is subject to N6-succinyllysine. Lys-16 is modified (N6-acetyllysine; alternate). An N6-succinyllysine; alternate modification is found at Lys-16. Tyr-24 is subject to Phosphotyrosine. Phosphoserine is present on Ser-35. Lys-40 carries the post-translational modification N6-succinyllysine. The residue at position 49 (Ser-49) is a Phosphoserine. An O2-binding site is contributed by His-58. His-87 lines the heme b pocket. Phosphoserine is present on Ser-102. Position 108 is a phosphothreonine (Thr-108). Residues Ser-124 and Ser-131 each carry the phosphoserine modification. Phosphothreonine occurs at positions 134 and 137. The residue at position 138 (Ser-138) is a Phosphoserine.

Belongs to the globin family. As to quaternary structure, heterotetramer of two alpha chains and two beta chains. Red blood cells.

In terms of biological role, involved in oxygen transport from the lung to the various peripheral tissues. Hemopressin acts as an antagonist peptide of the cannabinoid receptor CNR1. Hemopressin-binding efficiently blocks cannabinoid receptor CNR1 and subsequent signaling. This is Hemoglobin subunit alpha (HBA) from Gorilla gorilla gorilla (Western lowland gorilla).